A 192-amino-acid chain; its full sequence is MTEQSIDNILPSSEKNVKQWYVVHTASGAEKRIKEDMLRRIAKQKMTDFFEDILIPVFGVSEVKRGKNVKVEKKLMPSYILIKMNMTDKSWHLVKNIPGVTGFLGSKTTPKALTESEIQNIFNNLEAEAKETKNSKLYEVGEIVIVTDGPFETFTGTVEEIDQEKNRLKVSVSIFGKATPIELNFNQVKKND.

In terms of domain architecture, KOW spans 140–168; it reads VGEIVIVTDGPFETFTGTVEEIDQEKNRL.

The protein belongs to the NusG family.

In terms of biological role, participates in transcription elongation, termination and antitermination. The sequence is that of Transcription termination/antitermination protein NusG from Rickettsia felis (strain ATCC VR-1525 / URRWXCal2) (Rickettsia azadi).